Here is a 363-residue protein sequence, read N- to C-terminus: Protein-arginine kinase (363 aa).

One can recognise a Phosphagen kinase C-terminal domain in the interval 24–255 (IVLSSRIRLA…QQLIAQERAA (232 aa)). Residues 27–31 (SSRIR), histidine 92, arginine 126, 177–181 (RASVM), and 208–213 (RGTYGE) contribute to the ATP site. The RDXXRA motif of the pArg binding pocket involved in allosteric regulation motif lies at 338-343 (RDVRRA).

Belongs to the ATP:guanido phosphotransferase family.

It catalyses the reaction L-arginyl-[protein] + ATP = N(omega)-phospho-L-arginyl-[protein] + ADP + H(+). With respect to regulation, appears to be allosterically activated by the binding of pArg-containing polypeptides to the pArg-binding pocket localized in the C-terminal domain of McsB. In terms of biological role, catalyzes the specific phosphorylation of arginine residues in a large number of proteins. Is part of the bacterial stress response system. Protein arginine phosphorylation has a physiologically important role and is involved in the regulation of many critical cellular processes, such as protein homeostasis, motility, competence, and stringent and stress responses, by regulating gene expression and protein activity. The polypeptide is Protein-arginine kinase (Geobacillus kaustophilus (strain HTA426)).